Here is a 130-residue protein sequence, read N- to C-terminus: Small ribosomal subunit protein uS9 (130 aa).

This sequence belongs to the universal ribosomal protein uS9 family.

The polypeptide is Small ribosomal subunit protein uS9 (Salmonella paratyphi A (strain AKU_12601)).